Here is a 117-residue protein sequence, read N- to C-terminus: Anti-sigma F factor antagonist (117 aa).

Positions 3–113 constitute an STAS domain; that stretch reads LQIEMEHHRG…DNEVNALTEL (111 aa). A Phosphoserine modification is found at serine 58.

This sequence belongs to the anti-sigma-factor antagonist family. Phosphorylated by SpoIIAB on a serine residue.

Its function is as follows. In the phosphorylated form it could act as an anti-anti-sigma factor that counteracts SpoIIAB and thus releases sigma f from inhibition. This Paenibacillus polymyxa (Bacillus polymyxa) protein is Anti-sigma F factor antagonist (spoIIAA).